Here is a 174-residue protein sequence, read N- to C-terminus: Adenylate kinase (174 aa).

Positions 12 to 41 (STGDMLRAAIKAGTPLGLEAKKIIDEGGLV) are NMP. Residues Thr13, Arg18, 39 to 41 (GLV), 67 to 70 (GFPR), and Gln74 each bind AMP. Residues 104 to 141 (GRRVHLASGRTYHVTYNPPKVEGKDDVTGEDLIQRDDD) are LID. Residues Arg105 and 114-115 (TY) each bind ATP. AMP-binding residues include Arg138 and Arg149.

The protein belongs to the adenylate kinase family. In terms of assembly, monomer.

Its subcellular location is the cytoplasm. It carries out the reaction AMP + ATP = 2 ADP. Its pathway is purine metabolism; AMP biosynthesis via salvage pathway; AMP from ADP: step 1/1. Catalyzes the reversible transfer of the terminal phosphate group between ATP and AMP. Plays an important role in cellular energy homeostasis and in adenine nucleotide metabolism. This is Adenylate kinase from Neisseria cinerea.